The following is a 381-amino-acid chain: Transaldolase 2 (381 aa).

Lys-141 functions as the Schiff-base intermediate with substrate in the catalytic mechanism.

The protein belongs to the transaldolase family. Type 2 subfamily.

The protein localises to the cytoplasm. It carries out the reaction D-sedoheptulose 7-phosphate + D-glyceraldehyde 3-phosphate = D-erythrose 4-phosphate + beta-D-fructose 6-phosphate. It functions in the pathway carbohydrate degradation; pentose phosphate pathway; D-glyceraldehyde 3-phosphate and beta-D-fructose 6-phosphate from D-ribose 5-phosphate and D-xylulose 5-phosphate (non-oxidative stage): step 2/3. Its function is as follows. Transaldolase is important for the balance of metabolites in the pentose-phosphate pathway. This Nostoc sp. (strain PCC 7120 / SAG 25.82 / UTEX 2576) protein is Transaldolase 2 (tal2).